The primary structure comprises 153 residues: Small ribosomal subunit protein bS6 (153 aa).

The segment at glutamate 94–alanine 153 is disordered.

The protein belongs to the bacterial ribosomal protein bS6 family.

In terms of biological role, binds together with bS18 to 16S ribosomal RNA. This Allorhizobium ampelinum (strain ATCC BAA-846 / DSM 112012 / S4) (Agrobacterium vitis (strain S4)) protein is Small ribosomal subunit protein bS6.